Consider the following 788-residue polypeptide: ATP-dependent 6-phosphofructokinase, platelet type (788 aa).

An N-acetylmethionine modification is found at methionine 1. Positions 1-399 are N-terminal catalytic PFK domain 1; sequence MSDQDSSTSS…NLNTYKRLAI (399 aa). Phosphoserine occurs at positions 2, 6, 12, and 21. ATP-binding positions include glycine 34, 97–98, and 127–130; these read RC and GDGS. Mg(2+) is bound at residue aspartate 128. Phosphoserine is present on serine 142. Residues 173–175, arginine 210, 217–219, glutamate 273, arginine 301, and 307–310 contribute to the substrate site; these read SID, MGR, and HVQR. The Proton acceptor role is filled by aspartate 175. Phosphoserine is present on serine 386. The residue at position 395 (lysine 395) is an N6-acetyllysine. The tract at residues 400-411 is interdomain linker; sequence KEPDDKIPKSNC. Residues 412–788 are C-terminal regulatory PFK domain 2; that stretch reads NVAIINVGAP…VHNHGELSAI (377 aa). Residue arginine 481 participates in beta-D-fructose 2,6-bisphosphate binding. Lysine 486 carries the post-translational modification N6-acetyllysine. Beta-D-fructose 2,6-bisphosphate-binding positions include 538–542, arginine 576, 583–585, and glutamate 639; these read TVSNN and MGG. The O-linked (GlcNAc) serine glycan is linked to serine 540. Tyrosine 651 is modified (phosphotyrosine). Beta-D-fructose 2,6-bisphosphate contacts are provided by residues arginine 665 and 671 to 674; that span reads HMQQ. Lysine 688 carries the post-translational modification N6-acetyllysine. Arginine 744 is a beta-D-fructose 2,6-bisphosphate binding site.

The protein belongs to the phosphofructokinase type A (PFKA) family. ATP-dependent PFK group I subfamily. Eukaryotic two domain clade 'E' sub-subfamily. In terms of assembly, homo- and heterotetramers. Phosphofructokinase (PFK) enzyme functions as a tetramer composed of different combinations of 3 types of subunits, called PFKM (M), PFKL (L) and PFKP (P). The composition of the PFK tetramer differs according to the tissue type it is present in. The kinetic and regulatory properties of the tetrameric enzyme are dependent on the subunit composition, hence can vary across tissues. Interacts with ATG4B; promoting phosphorylation of ATG4B. Mg(2+) serves as cofactor. Post-translationally, glcNAcylation decreases enzyme activity. In terms of processing, phosphorylation at Ser-386 promotes interaction with ATG4B. In terms of tissue distribution, expressed at high level in neuroendocrine tissues.

It localises to the cytoplasm. It carries out the reaction beta-D-fructose 6-phosphate + ATP = beta-D-fructose 1,6-bisphosphate + ADP + H(+). It participates in carbohydrate degradation; glycolysis; D-glyceraldehyde 3-phosphate and glycerone phosphate from D-glucose: step 3/4. Its activity is regulated as follows. Allosterically activated by ADP, AMP, or fructose 2,6-bisphosphate, and allosterically inhibited by ATP or citrate. Functionally, catalyzes the phosphorylation of D-fructose 6-phosphate to fructose 1,6-bisphosphate by ATP, the first committing step of glycolysis. This chain is ATP-dependent 6-phosphofructokinase, platelet type (Pfkp), found in Rattus norvegicus (Rat).